The sequence spans 323 residues: Type II restriction enzyme BsoBI (323 aa).

Positions 212, 240, and 242 each coordinate Mg(2+).

Homodimer.

The catalysed reaction is Endonucleolytic cleavage of DNA to give specific double-stranded fragments with terminal 5'-phosphates.. In terms of biological role, a P subtype restriction enzyme that recognizes the double-stranded sequence 5'-CYCGRG-3' and cleaves after C-1. This is Type II restriction enzyme BsoBI from Geobacillus stearothermophilus (Bacillus stearothermophilus).